Reading from the N-terminus, the 102-residue chain is Glutaredoxin 1 (102 aa).

Residues 1-96 enclose the Glutaredoxin domain; that stretch reads MNKAILHTII…KLLENQPKTT (96 aa). A disulfide bond links Cys-17 and Cys-20.

Belongs to the glutaredoxin family. As to quaternary structure, monomer.

It localises to the cytoplasm. Its function is as follows. Has a glutathione-disulfide oxidoreductase activity in the presence of NADPH and glutathione reductase. Reduces low molecular weight disulfides and proteins. The polypeptide is Glutaredoxin 1 (grxC1) (Rickettsia conorii (strain ATCC VR-613 / Malish 7)).